Here is a 213-residue protein sequence, read N- to C-terminus: Imidazole glycerol phosphate synthase subunit HisH (213 aa).

A Glutamine amidotransferase type-1 domain is found at Asn4–Asp211. Cys82 serves as the catalytic Nucleophile. Catalysis depends on residues His186 and Glu188.

In terms of assembly, heterodimer of HisH and HisF.

It localises to the cytoplasm. The enzyme catalyses 5-[(5-phospho-1-deoxy-D-ribulos-1-ylimino)methylamino]-1-(5-phospho-beta-D-ribosyl)imidazole-4-carboxamide + L-glutamine = D-erythro-1-(imidazol-4-yl)glycerol 3-phosphate + 5-amino-1-(5-phospho-beta-D-ribosyl)imidazole-4-carboxamide + L-glutamate + H(+). It catalyses the reaction L-glutamine + H2O = L-glutamate + NH4(+). It participates in amino-acid biosynthesis; L-histidine biosynthesis; L-histidine from 5-phospho-alpha-D-ribose 1-diphosphate: step 5/9. Its function is as follows. IGPS catalyzes the conversion of PRFAR and glutamine to IGP, AICAR and glutamate. The HisH subunit catalyzes the hydrolysis of glutamine to glutamate and ammonia as part of the synthesis of IGP and AICAR. The resulting ammonia molecule is channeled to the active site of HisF. This chain is Imidazole glycerol phosphate synthase subunit HisH, found in Prochlorococcus marinus (strain SARG / CCMP1375 / SS120).